The primary structure comprises 157 residues: S-ribosylhomocysteine lyase (157 aa).

Fe cation is bound by residues His-60, His-64, and Cys-127.

It belongs to the LuxS family. Homodimer. Fe cation serves as cofactor.

It catalyses the reaction S-(5-deoxy-D-ribos-5-yl)-L-homocysteine = (S)-4,5-dihydroxypentane-2,3-dione + L-homocysteine. Involved in the synthesis of autoinducer 2 (AI-2) which is secreted by bacteria and is used to communicate both the cell density and the metabolic potential of the environment. The regulation of gene expression in response to changes in cell density is called quorum sensing. Catalyzes the transformation of S-ribosylhomocysteine (RHC) to homocysteine (HC) and 4,5-dihydroxy-2,3-pentadione (DPD). In Helicobacter acinonychis (strain Sheeba), this protein is S-ribosylhomocysteine lyase.